The chain runs to 259 residues: (3R)-3-hydroxyacyl-CoA dehydrogenase (259 aa).

NAD(+) is bound by residues 13–21 (LVTGAGSGI) and 40–41 (DL). Position 58 is a phosphoserine (Ser-58). An N6-acetyllysine modification is found at Lys-66. 72-74 (ADV) contacts NAD(+). Ser-154 provides a ligand contact to substrate. Position 158 is an N6-succinyllysine (Lys-158). Catalysis depends on Tyr-167, which acts as the Proton acceptor. NAD(+) is bound by residues 167–171 (YASSK) and 200–202 (IAT). Lys-171 is subject to N6-succinyllysine.

It belongs to the short-chain dehydrogenases/reductases (SDR) family. Heterotetramer with CBR4; contains two molecules of HSD17B8 and CBR4. As to expression, kidney, liver, testis, ovary and spleen. Oviduct, uterus, mammary gland, vagina, prostate, clitoral gland and moderately heart, dorsal skin, brain and lung.

The protein localises to the mitochondrion matrix. It catalyses the reaction a (3R)-3-hydroxyacyl-CoA + NAD(+) = a 3-oxoacyl-CoA + NADH + H(+). The catalysed reaction is 17beta-estradiol + NAD(+) = estrone + NADH + H(+). It carries out the reaction testosterone + NAD(+) = androst-4-ene-3,17-dione + NADH + H(+). The enzyme catalyses 17beta-hydroxy-5alpha-androstan-3-one + NAD(+) = 5alpha-androstan-3,17-dione + NADH + H(+). The protein operates within lipid metabolism; fatty acid biosynthesis. It participates in steroid biosynthesis; estrogen biosynthesis. Its pathway is lipid metabolism; mitochondrial fatty acid beta-oxidation. Functionally, required for the solubility and assembly of the heterotetramer 3-ketoacyl-[acyl carrier protein] (ACP) reductase functional complex (KAR or KAR1) that forms part of the mitochondrial fatty acid synthase (mtFAS). Alpha-subunit of the KAR complex, acts as scaffold protein, required for the stability of carbonyl reductase type-4 (CBR4, beta-subunit of the KAR complex) and for its 3-ketoacyl-ACP reductase activity, thereby participating in mitochondrial fatty acid biosynthesis. Catalyzes the NAD-dependent conversion of (3R)-3-hydroxyacyl-CoA into 3-ketoacyl-CoA (3-oxoacyl-CoA) with no chain length preference, this enzymatic activity is not needed for the KAR function. Prefers (3R)-3-hydroxyacyl-CoA over (3S)-3-hydroxyacyl-CoA and displays enzymatic activity only in the presence of NAD(+)(H). Cooperates with enoyl-CoA hydratase 1 in mitochondria, together they constitute an alternative route to the auxiliary enzyme pathways for the breakdown of Z-PUFA (cis polyunsaturated fatty acid) enoyl-esters. NAD-dependent 17-beta-hydroxysteroid dehydrogenase with highest activity towards estradiol. It efficiently catalyzes the oxidation of estradiol (E2), testosterone, and dihydrotestosterone. Primarily an oxidative enzyme, it can switch to a reductive mode determined in the appropriate physiologic milieu and catalyze the reduction of estrone (E1) to form biologically active estradiol (E2). The chain is (3R)-3-hydroxyacyl-CoA dehydrogenase (Hsd17b8) from Mus musculus (Mouse).